A 273-amino-acid chain; its full sequence is Elongation factor Ts (273 aa).

An involved in Mg(2+) ion dislocation from EF-Tu region spans residues 79–82 (TDFV).

This sequence belongs to the EF-Ts family.

It localises to the cytoplasm. Functionally, associates with the EF-Tu.GDP complex and induces the exchange of GDP to GTP. It remains bound to the aminoacyl-tRNA.EF-Tu.GTP complex up to the GTP hydrolysis stage on the ribosome. This is Elongation factor Ts from Hydrogenobaculum sp. (strain Y04AAS1).